Here is a 362-residue protein sequence, read N- to C-terminus: Tyrosyl-DNA phosphodiesterase 2 (362 aa).

Position 1 is an N-acetylmethionine (M1). The segment at 1-20 (MELGSCLEGGREAAEEEGEP) is disordered. Residues K23 and K82 each participate in a glycyl lysine isopeptide (Lys-Gly) (interchain with G-Cter in SUMO2) cross-link. Residues 87-109 (LTNEETTDSTTSKISPSEDTQQE) form a disordered region. Phosphothreonine; by ACVR1B occurs at positions 88 and 92. Residues 94–109 (DSTTSKISPSEDTQQE) are compositionally biased toward polar residues. S95 carries the phosphoserine modification. Residues 120–124 (NIDGL) form an interaction with 5' end of substrate DNA region. Positions 122 and 152 each coordinate Mg(2+). The tract at residues 226–231 (HLESTR) is interaction with 5' end of substrate DNA. Residue D262 is the Proton donor/acceptor of the active site. The tract at residues 264 to 266 (NLR) is interaction with 5' end of substrate DNA.

This sequence belongs to the CCR4/nocturin family. In terms of assembly, interacts with TRAF2, TRAF3, TRAF5, TRAF6, TNFRSF8/CD30, TNFRSF5/CD40, TNFRSF1B/TNF-R75, ETS1, ETS2, FLI1, SMAD3 and ACVR1B/ALK4. As to quaternary structure, (Microbial infection) Interacts with Hantaan hantavirus nucleoprotein. (Microbial infection) Interacts with Seoul hantavirus nucleoprotein. The cofactor is Mg(2+). Mn(2+) serves as cofactor. Post-translationally, ubiquitinated by TRAF6. As to expression, widely expressed. Highly expressed in various brain regions, including the frontal and occipital lobes, the hippocampus, the striatum and the cerebellum.

It is found in the nucleus. It localises to the PML body. The protein localises to the nucleolus. The protein resides in the cytoplasm. Its function is as follows. DNA repair enzyme that can remove a variety of covalent adducts from DNA through hydrolysis of a 5'-phosphodiester bond, giving rise to DNA with a free 5' phosphate. Catalyzes the hydrolysis of dead-end complexes between DNA and the topoisomerase 2 (TOP2) active site tyrosine residue. The 5'-tyrosyl DNA phosphodiesterase activity can enable the repair of TOP2-induced DNA double-strand breaks/DSBs without the need for nuclease activity, creating a 'clean' DSB with 5'-phosphate termini that are ready for ligation. Thereby, protects the transcription of many genes involved in neurological development and maintenance from the abortive activity of TOP2. Hydrolyzes 5'-phosphoglycolates on protruding 5' ends on DSBs due to DNA damage by radiation and free radicals. Has preference for single-stranded DNA or duplex DNA with a 4 base pair overhang as substrate. Acts as a regulator of ribosome biogenesis following stress. Also has 3'-tyrosyl DNA phosphodiesterase activity, but less efficiently and much slower than TDP1. Constitutes the major if not only 5'-tyrosyl-DNA phosphodiesterase in cells. Also acts as an adapter by participating in the specific activation of MAP3K7/TAK1 in response to TGF-beta: associates with components of the TGF-beta receptor-TRAF6-TAK1 signaling module and promotes their ubiquitination dependent complex formation. Involved in non-canonical TGF-beta induced signaling routes. May also act as a negative regulator of ETS1 and may inhibit NF-kappa-B activation. (Microbial infection) Used by picornaviruses to remove the small polypeptide, VPg (virus Protein genome-linked, the primer for viral RNA synthesis), from the genomic RNA of the virus. Acts as a 5'-tyrosyl RNA phosphodiesterase and cleaves the covalent VPg-Tyr-RNA bond. This cleavage would play a role in viral replication and occur in viral replication vesicles, but would not act on viral mRNA. The polypeptide is Tyrosyl-DNA phosphodiesterase 2 (Homo sapiens (Human)).